The following is a 482-amino-acid chain: Ribosomal protein S6 kinase beta-2 (482 aa).

The interval 1–26 (MAAVFDLDLETEEGSEGEGEPELSPA) is disordered. A compositionally biased stretch (acidic residues) spans 7-21 (LDLETEEGSEGEGEP). Residue Ser-15 is modified to Phosphoserine. The 262-residue stretch at 67–328 (FELLRVLGKG…AADVQRHPFF (262 aa)) folds into the Protein kinase domain. ATP is bound by residues 73 to 81 (LGKGGYGKV) and Lys-99. The active-site Proton acceptor is Asp-194. In terms of domain architecture, AGC-kinase C-terminal spans 329–399 (RHMNWDDLLA…VAPSVLDSIK (71 aa)). Residues 407-482 (KLRSPRRLNS…SKRGRGRPGR (76 aa)) are disordered. Phosphoserine occurs at positions 417 and 423. Residues 437 to 466 (PSLPEPTELPLPPLLPPPPPSTTAPLPIRP) are compositionally biased toward pro residues. The short motif at 471–477 (KKSKRGR) is the Nuclear localization signal element. Over residues 471 to 482 (KKSKRGRGRPGR) the composition is skewed to basic residues. Ser-473 is subject to Phosphoserine; by PKC.

This sequence belongs to the protein kinase superfamily. AGC Ser/Thr protein kinase family. S6 kinase subfamily. In terms of processing, phosphorylated and activated by MTOR. Phosphorylation by PKC within the NLS in response to mitogenic stimuli causes cytoplasmic retention.

It localises to the cytoplasm. Its subcellular location is the nucleus. It carries out the reaction L-seryl-[protein] + ATP = O-phospho-L-seryl-[protein] + ADP + H(+). It catalyses the reaction L-threonyl-[protein] + ATP = O-phospho-L-threonyl-[protein] + ADP + H(+). In terms of biological role, phosphorylates specifically ribosomal protein S6. Seems to act downstream of mTOR signaling in response to growth factors and nutrients to promote cell proliferation, cell growth and cell cycle progression in an alternative pathway regulated by MEAK7. The sequence is that of Ribosomal protein S6 kinase beta-2 (RPS6KB2) from Homo sapiens (Human).